We begin with the raw amino-acid sequence, 249 residues long: Acidic leucine-rich nuclear phosphoprotein 32 family member A (249 aa).

A Phosphothreonine modification is found at Thr-15. Phosphoserine is present on Ser-17. LRR repeat units follow at residues 18–38 (DVKE…EGLT), 43–64 (ELEF…PKLN), 65–87 (KLKK…AEKC), and 89–110 (NLTH…EPLK). Residues 123–161 (CEVTNLNDYRENVFKLLPQLTYLDGYDRDDKEAPDSDAE) form the LRRCT domain. Residues 147–156 (GYDRDDKEAP) are compositionally biased toward basic and acidic residues. Residues 147–249 (GYDRDDKEAP…EPEDEGEDDD (103 aa)) are disordered. The tract at residues 150 to 174 (RDDKEAPDSDAEGYVEGLDDDEEDE) is necessary for tumor-suppressive function. Over residues 157–230 (DSDAEGYVEG…DEEDEEELGE (74 aa)) the composition is skewed to acidic residues. Ser-158 and Ser-204 each carry phosphoserine. The segment at 165–249 (EGLDDDEEDE…EPEDEGEDDD (85 aa)) is interaction with E4F1.

The protein belongs to the ANP32 family. As to quaternary structure, component of the SET complex, composed of at least ANP32A, APEX1, HMGB2, NME1, SET and TREX1. Directly interacts with SET. Interacts with ATXN1/SCA1. Interacts with MAP1B. Interacts with ELAVL1. Part of the INHAT (inhibitor of histone acetyltransferases) complex. Interacts with E4F1. In terms of processing, the N-terminus is blocked. Post-translationally, phosphorylated on serine residues, at least in part by casein kinase 2/CK2. Some glutamate residues are glycylated by TTLL8. This modification occurs exclusively on glutamate residues and results in a glycine chain on the gamma-carboxyl group. Widely distributed in the central nervous system, with an abundant expression in the cerebellum.

The protein resides in the nucleus. Its subcellular location is the cytoplasm. The protein localises to the endoplasmic reticulum. Multifunctional protein that is involved in the regulation of many processes including tumor suppression, apoptosis, cell cycle progression or transcription. Promotes apoptosis by favouring the activation of caspase-9/CASP9 and allowing apoptosome formation. In addition, plays a role in the modulation of histone acetylation and transcription as part of the INHAT (inhibitor of histone acetyltransferases) complex. Inhibits the histone-acetyltranferase activity of EP300/CREBBP (CREB-binding protein) and EP300/CREBBP-associated factor by histone masking. Preferentially binds to unmodified histone H3 and sterically inhibiting its acetylation and phosphorylation leading to cell growth inhibition. Participates in other biochemical processes such as regulation of mRNA nuclear-to-cytoplasmic translocation and stability by its association with ELAVL1 (Hu-antigen R). Plays a role in E4F1-mediated transcriptional repression as well as inhibition of protein phosphatase 2A. This is Acidic leucine-rich nuclear phosphoprotein 32 family member A (ANP32A) from Bos taurus (Bovine).